A 103-amino-acid polypeptide reads, in one-letter code: Putative sulfurtransferase YtwF (103 aa).

Residues 17-100 (ADEELYLIDV…GMMAWEGETK (84 aa)) enclose the Rhodanese domain. Catalysis depends on Cys65, which acts as the Cysteine persulfide intermediate.

This is Putative sulfurtransferase YtwF (ytwF) from Bacillus subtilis (strain 168).